Reading from the N-terminus, the 110-residue chain is UPF0122 protein SMU_1061 (110 aa).

It belongs to the UPF0122 family.

Functionally, might take part in the signal recognition particle (SRP) pathway. This is inferred from the conservation of its genetic proximity to ftsY/ffh. May be a regulatory protein. In Streptococcus mutans serotype c (strain ATCC 700610 / UA159), this protein is UPF0122 protein SMU_1061 (ylxM).